A 485-amino-acid polypeptide reads, in one-letter code: MIARTKIICTIGPATNTPEMLEKLLDAGMNVARLNFSHGTHESHGRTIAILKELREKRQVPLAIMLDTKGPEIRLGQVESPIKVQPGDRLTLVSKEILGSKESGVTLYPSCVFPYVRERAPVLIDDGYIQAVVVNAQEHMVEIEFQNSGEIKSNKSLSIKDIDVALPFMTEKDIADLKFGVEQELDLIAASFVRCNEDIDSMRKVLESFGRPNMPIIAKIENHLGVQNFQEIARAADGIMIARGDLGIELSIVEVPGLQKFMARASRETGRFCITATQMLESMIRNPLPTRAEVSDVANAIYDGTSAVMLSGETASGAHPVHAVKTMRSIIQETEKTFDYHAFFQLNDKNSALKVSPYLEAIGFSGIQIAEKASAKAIIVYTQTGGSPMFLSKYRPYLPIIAVTPNRNVYYRLAVEWGVYPMLTLESNRTVWRHQACVYGVEKGILSNYDKILVFSRGAGMQDTNNLTLTTVHDALSPSLDEIVP.

Arg-33 provides a ligand contact to substrate. Positions 35, 37, 67, and 68 each coordinate K(+). 35-38 is an ATP binding site; that stretch reads NFSH. ATP is bound by residues Arg-74 and Lys-155. Glu-221 is a binding site for Mg(2+). The substrate site is built by Gly-244, Asp-245, and Thr-277. Asp-245 serves as a coordination point for Mg(2+).

This sequence belongs to the pyruvate kinase family. Homotetramer. It depends on Mg(2+) as a cofactor. The cofactor is K(+).

It catalyses the reaction pyruvate + ATP = phosphoenolpyruvate + ADP + H(+). The protein operates within carbohydrate degradation; glycolysis; pyruvate from D-glyceraldehyde 3-phosphate: step 5/5. This is Pyruvate kinase (pyk) from Chlamydia trachomatis serovar L2 (strain ATCC VR-902B / DSM 19102 / 434/Bu).